Reading from the N-terminus, the 571-residue chain is Urease subunit alpha (571 aa).

The Urease domain occupies 134–571 (GAIDTHIHFI…LPMAQRYFLF (438 aa)). 3 residues coordinate Ni(2+): H139, H141, and K222. N6-carboxylysine is present on K222. H224 lines the substrate pocket. Residues H251 and H277 each contribute to the Ni(2+) site. Residue H325 is the Proton donor of the active site. A Ni(2+)-binding site is contributed by D365.

Belongs to the metallo-dependent hydrolases superfamily. Urease alpha subunit family. In terms of assembly, heterotrimer of UreA (gamma), UreB (beta) and UreC (alpha) subunits. Three heterotrimers associate to form the active enzyme. The cofactor is Ni cation. Post-translationally, carboxylation allows a single lysine to coordinate two nickel ions.

Its subcellular location is the cytoplasm. The catalysed reaction is urea + 2 H2O + H(+) = hydrogencarbonate + 2 NH4(+). It participates in nitrogen metabolism; urea degradation; CO(2) and NH(3) from urea (urease route): step 1/1. This chain is Urease subunit alpha, found in Bordetella pertussis (strain Tohama I / ATCC BAA-589 / NCTC 13251).